The chain runs to 206 residues: MTANELITGDFTDASEPFSLFGTWLKEAEKNEVNDPNAVALATVDPDGMPNVRMVLLKGFDERGFVLYTNFESQKGREMLATRKAALCFHWKSLRRQVRLRGPVEIVSDEEADEYFMSRPRGSRIGAWASKQSRPLESRFALEKAVAEYTARHAIGEIPRPDYWSGFRIRPLSIEFWHDRPFRLHDRVEFRRETPDGGWTKVRMYP.

FMN-binding positions include 53 to 58 (RMVLLK), 68 to 69 (YT), Lys-75, and Gln-97. Residue Lys-58 coordinates substrate. Substrate contacts are provided by Tyr-115, Arg-119, and Ser-123. FMN-binding positions include 132–133 (QS) and Trp-177. 183-185 (RLH) contributes to the substrate binding site. Arg-187 provides a ligand contact to FMN.

The protein belongs to the pyridoxamine 5'-phosphate oxidase family. Homodimer. FMN serves as cofactor.

It catalyses the reaction pyridoxamine 5'-phosphate + O2 + H2O = pyridoxal 5'-phosphate + H2O2 + NH4(+). The catalysed reaction is pyridoxine 5'-phosphate + O2 = pyridoxal 5'-phosphate + H2O2. It participates in cofactor metabolism; pyridoxal 5'-phosphate salvage; pyridoxal 5'-phosphate from pyridoxamine 5'-phosphate: step 1/1. Its pathway is cofactor metabolism; pyridoxal 5'-phosphate salvage; pyridoxal 5'-phosphate from pyridoxine 5'-phosphate: step 1/1. In terms of biological role, catalyzes the oxidation of either pyridoxine 5'-phosphate (PNP) or pyridoxamine 5'-phosphate (PMP) into pyridoxal 5'-phosphate (PLP). The sequence is that of Pyridoxine/pyridoxamine 5'-phosphate oxidase from Rhizobium meliloti (strain 1021) (Ensifer meliloti).